The sequence spans 421 residues: Fusaric acid cluster transcription factor FUB10 (421 aa).

Positions 16–47 (CDRCRAQKLRCHRDSGHSTDACLRCLKSGIEC) form a DNA-binding region, zn(2)-C6 fungal-type. The tract at residues 50-92 (SKARPTGRPPSRQVQPTVVVEQGDTSSSSHTTDSSPSAGGTDM) is disordered. Over residues 74–86 (TSSSSHTTDSSPS) the composition is skewed to low complexity.

The protein resides in the nucleus. Its function is as follows. Transcription factor that regulates the expression of the gene cluster that mediates the biosynthesis of fusaric acid, a mycotoxin with low to moderate toxicity to animals and humans, but with high phytotoxic properties. In Gibberella moniliformis (strain M3125 / FGSC 7600) (Maize ear and stalk rot fungus), this protein is Fusaric acid cluster transcription factor FUB10.